Consider the following 362-residue polypeptide: DNA polymerase IV (362 aa).

Residues 6-187 (IIHVDMDAFY…LPVSSFHGVG (182 aa)) form the UmuC domain. Residues Asp10 and Asp105 each contribute to the Mg(2+) site. Residue Glu106 is part of the active site.

It belongs to the DNA polymerase type-Y family. As to quaternary structure, monomer. Mg(2+) is required as a cofactor.

It is found in the cytoplasm. It catalyses the reaction DNA(n) + a 2'-deoxyribonucleoside 5'-triphosphate = DNA(n+1) + diphosphate. In terms of biological role, poorly processive, error-prone DNA polymerase involved in untargeted mutagenesis. Copies undamaged DNA at stalled replication forks, which arise in vivo from mismatched or misaligned primer ends. These misaligned primers can be extended by PolIV. Exhibits no 3'-5' exonuclease (proofreading) activity. May be involved in translesional synthesis, in conjunction with the beta clamp from PolIII. The sequence is that of DNA polymerase IV from Leptospira interrogans serogroup Icterohaemorrhagiae serovar copenhageni (strain Fiocruz L1-130).